Reading from the N-terminus, the 120-residue chain is Peptidyl-tRNA hydrolase (120 aa).

Belongs to the PTH2 family. In terms of assembly, homodimer.

The protein resides in the cytoplasm. It catalyses the reaction an N-acyl-L-alpha-aminoacyl-tRNA + H2O = an N-acyl-L-amino acid + a tRNA + H(+). Functionally, the natural substrate for this enzyme may be peptidyl-tRNAs which drop off the ribosome during protein synthesis. In Saccharolobus solfataricus (strain ATCC 35092 / DSM 1617 / JCM 11322 / P2) (Sulfolobus solfataricus), this protein is Peptidyl-tRNA hydrolase.